The following is a 180-amino-acid chain: ATP-dependent protease subunit HslV (180 aa).

Residue Thr7 is part of the active site. 3 residues coordinate Na(+): Gly165, Cys168, and Thr171.

It belongs to the peptidase T1B family. HslV subfamily. A double ring-shaped homohexamer of HslV is capped on each side by a ring-shaped HslU homohexamer. The assembly of the HslU/HslV complex is dependent on binding of ATP.

Its subcellular location is the cytoplasm. It carries out the reaction ATP-dependent cleavage of peptide bonds with broad specificity.. With respect to regulation, allosterically activated by HslU binding. In terms of biological role, protease subunit of a proteasome-like degradation complex believed to be a general protein degrading machinery. The sequence is that of ATP-dependent protease subunit HslV from Bacillus cytotoxicus (strain DSM 22905 / CIP 110041 / 391-98 / NVH 391-98).